The following is a 137-amino-acid chain: Nucleoside diphosphate kinase (137 aa).

Residues K9, F57, R85, T91, R102, and N112 each contribute to the ATP site. H115 functions as the Pros-phosphohistidine intermediate in the catalytic mechanism.

It belongs to the NDK family. As to quaternary structure, homotetramer. Mg(2+) serves as cofactor.

It is found in the cytoplasm. The catalysed reaction is a 2'-deoxyribonucleoside 5'-diphosphate + ATP = a 2'-deoxyribonucleoside 5'-triphosphate + ADP. It catalyses the reaction a ribonucleoside 5'-diphosphate + ATP = a ribonucleoside 5'-triphosphate + ADP. In terms of biological role, major role in the synthesis of nucleoside triphosphates other than ATP. The ATP gamma phosphate is transferred to the NDP beta phosphate via a ping-pong mechanism, using a phosphorylated active-site intermediate. The sequence is that of Nucleoside diphosphate kinase from Helicobacter hepaticus (strain ATCC 51449 / 3B1).